The following is a 277-amino-acid chain: Hydroxyethylthiazole kinase (277 aa).

A substrate-binding site is contributed by M55. Residues R130 and S176 each contribute to the ATP site. Residue G203 coordinates substrate.

This sequence belongs to the Thz kinase family. The cofactor is Mg(2+).

It catalyses the reaction 5-(2-hydroxyethyl)-4-methylthiazole + ATP = 4-methyl-5-(2-phosphooxyethyl)-thiazole + ADP + H(+). It participates in cofactor biosynthesis; thiamine diphosphate biosynthesis; 4-methyl-5-(2-phosphoethyl)-thiazole from 5-(2-hydroxyethyl)-4-methylthiazole: step 1/1. In terms of biological role, catalyzes the phosphorylation of the hydroxyl group of 4-methyl-5-beta-hydroxyethylthiazole (THZ). In Cutibacterium acnes (strain DSM 16379 / KPA171202) (Propionibacterium acnes), this protein is Hydroxyethylthiazole kinase.